The following is an 87-amino-acid chain: Translation initiation factor IF-1 2 (87 aa).

An S1-like domain is found at 1–72 (MAADDHIEME…TKGRIARRTT (72 aa)). The interval 65-87 (GRIARRTTTPSGGPRPARSGNRR) is disordered.

Belongs to the IF-1 family. In terms of assembly, component of the 30S ribosomal translation pre-initiation complex which assembles on the 30S ribosome in the order IF-2 and IF-3, IF-1 and N-formylmethionyl-tRNA(fMet); mRNA recruitment can occur at any time during PIC assembly.

It is found in the cytoplasm. One of the essential components for the initiation of protein synthesis. Stabilizes the binding of IF-2 and IF-3 on the 30S subunit to which N-formylmethionyl-tRNA(fMet) subsequently binds. Helps modulate mRNA selection, yielding the 30S pre-initiation complex (PIC). Upon addition of the 50S ribosomal subunit IF-1, IF-2 and IF-3 are released leaving the mature 70S translation initiation complex. The polypeptide is Translation initiation factor IF-1 2 (Nitratidesulfovibrio vulgaris (strain ATCC 29579 / DSM 644 / CCUG 34227 / NCIMB 8303 / VKM B-1760 / Hildenborough) (Desulfovibrio vulgaris)).